We begin with the raw amino-acid sequence, 447 residues long: MLENIRDAVRKFLTGSTPYEKAVDEFIKELQKSLISSDVNVKLVFSLTAKIKERLNKEKPPSVLERKEWFISIVYDELSKLFGGDKEPNVNPTRLPFIIMLVGVQGSGKTTTAGKLAYFYKRRGYKVGLVAADVYRPAAYDQLLQLGNQIGVPVYGEPNNQNAIEIAKKGVDTFVKNKMDIIIVDTAGRHGYGEETKLLEEMKEIYEALKPDDVILVIDASIGQKAYDLASRFHQASPIGSIIITKMDGTAKGGGALSAVAATGATIKFIGTGEKIDELEIFNAKRYVSRILGMGDIESILEKVKGLEEYEKIQKKMEDVMEGKGKLTLRDVYAQIMALRKMGPLSKVLQHIPGLGVMLPTPSEDQLKLGEEKIRRWLAALNSMTYKELENPSIIDKSRMRRIAEGSGLEVEDVRELLEWYNNMNKLLKMVKRRRGSIDKLFGGKIG.

GTP is bound by residues 103–110, 185–189, and 245–248; these read GVQGSGKT, DTAGR, and TKMD.

This sequence belongs to the GTP-binding SRP family. SRP54 subfamily. In terms of assembly, part of the signal recognition particle protein translocation system, which is composed of SRP and FtsY. Archaeal SRP consists of a 7S RNA molecule of 300 nucleotides and two protein subunits: SRP54 and SRP19.

The protein localises to the cytoplasm. The enzyme catalyses GTP + H2O = GDP + phosphate + H(+). Functionally, involved in targeting and insertion of nascent membrane proteins into the cytoplasmic membrane. Binds to the hydrophobic signal sequence of the ribosome-nascent chain (RNC) as it emerges from the ribosomes. The SRP-RNC complex is then targeted to the cytoplasmic membrane where it interacts with the SRP receptor FtsY. This Saccharolobus islandicus (strain L.S.2.15 / Lassen #1) (Sulfolobus islandicus) protein is Signal recognition particle 54 kDa protein.